The primary structure comprises 148 residues: Macrodomain Ter protein (148 aa).

The protein belongs to the MatP family. As to quaternary structure, homodimer.

It is found in the cytoplasm. Its function is as follows. Required for spatial organization of the terminus region of the chromosome (Ter macrodomain) during the cell cycle. Prevents early segregation of duplicated Ter macrodomains during cell division. Binds specifically to matS, which is a 13 bp signature motif repeated within the Ter macrodomain. This is Macrodomain Ter protein from Haemophilus influenzae (strain ATCC 51907 / DSM 11121 / KW20 / Rd).